Here is a 452-residue protein sequence, read N- to C-terminus: Pup--protein ligase (452 aa).

Glutamate 9 is a binding site for Mg(2+). An ATP-binding site is contributed by arginine 53. Tyrosine 55 provides a ligand contact to Mg(2+). Aspartate 57 acts as the Proton acceptor in catalysis. Glutamate 63 lines the Mg(2+) pocket. ATP is bound by residues threonine 66 and tryptophan 419.

It belongs to the Pup ligase/Pup deamidase family. Pup-conjugating enzyme subfamily.

The enzyme catalyses ATP + [prokaryotic ubiquitin-like protein]-L-glutamate + [protein]-L-lysine = ADP + phosphate + N(6)-([prokaryotic ubiquitin-like protein]-gamma-L-glutamyl)-[protein]-L-lysine.. Its pathway is protein degradation; proteasomal Pup-dependent pathway. It participates in protein modification; protein pupylation. Functionally, catalyzes the covalent attachment of the prokaryotic ubiquitin-like protein modifier Pup to the proteasomal substrate proteins, thereby targeting them for proteasomal degradation. This tagging system is termed pupylation. The ligation reaction involves the side-chain carboxylate of the C-terminal glutamate of Pup and the side-chain amino group of a substrate lysine. This is Pup--protein ligase from Thermobifida fusca (strain YX).